The primary structure comprises 294 residues: N-acetylmuramic acid 6-phosphate etherase (294 aa).

In terms of domain architecture, SIS spans 56-219; that stretch reads TSYSLRNGGR…STLSMVSVGK (164 aa). The Proton donor role is filled by Glu-84. The active site involves Glu-115.

It belongs to the GCKR-like family. MurNAc-6-P etherase subfamily. Homodimer.

It catalyses the reaction N-acetyl-D-muramate 6-phosphate + H2O = N-acetyl-D-glucosamine 6-phosphate + (R)-lactate. The protein operates within amino-sugar metabolism; 1,6-anhydro-N-acetylmuramate degradation. Its pathway is amino-sugar metabolism; N-acetylmuramate degradation. It participates in cell wall biogenesis; peptidoglycan recycling. Specifically catalyzes the cleavage of the D-lactyl ether substituent of MurNAc 6-phosphate, producing GlcNAc 6-phosphate and D-lactate. Together with AnmK, is also required for the utilization of anhydro-N-acetylmuramic acid (anhMurNAc) either imported from the medium or derived from its own cell wall murein, and thus plays a role in cell wall recycling. The protein is N-acetylmuramic acid 6-phosphate etherase of Francisella tularensis subsp. tularensis (strain SCHU S4 / Schu 4).